The chain runs to 450 residues: Phosphoglucosamine mutase (450 aa).

Serine 102 serves as the catalytic Phosphoserine intermediate. Mg(2+) contacts are provided by serine 102, aspartate 242, aspartate 244, and aspartate 246. Phosphoserine is present on serine 102.

Belongs to the phosphohexose mutase family. The cofactor is Mg(2+). Activated by phosphorylation.

It carries out the reaction alpha-D-glucosamine 1-phosphate = D-glucosamine 6-phosphate. Catalyzes the conversion of glucosamine-6-phosphate to glucosamine-1-phosphate. The chain is Phosphoglucosamine mutase from Staphylococcus haemolyticus (strain JCSC1435).